Reading from the N-terminus, the 134-residue chain is Large ribosomal subunit protein eL32 (134 aa).

Belongs to the eukaryotic ribosomal protein eL32 family.

This Tetrahymena thermophila (strain SB210) protein is Large ribosomal subunit protein eL32 (RPL32).